The sequence spans 492 residues: Proline--tRNA ligase (492 aa).

This sequence belongs to the class-II aminoacyl-tRNA synthetase family. ProS type 3 subfamily. As to quaternary structure, homodimer.

It is found in the cytoplasm. The enzyme catalyses tRNA(Pro) + L-proline + ATP = L-prolyl-tRNA(Pro) + AMP + diphosphate. Catalyzes the attachment of proline to tRNA(Pro) in a two-step reaction: proline is first activated by ATP to form Pro-AMP and then transferred to the acceptor end of tRNA(Pro). This Flavobacterium johnsoniae (strain ATCC 17061 / DSM 2064 / JCM 8514 / BCRC 14874 / CCUG 350202 / NBRC 14942 / NCIMB 11054 / UW101) (Cytophaga johnsonae) protein is Proline--tRNA ligase.